The sequence spans 492 residues: Alpha-amylase-related protein (492 aa).

The first 18 residues, 1–18, serve as a signal peptide directing secretion; it reads MRLSLSVLLCLGLALTLA. Gln19 carries the pyrrolidone carboxylic acid modification. Residues Cys46 and Cys102 are joined by a disulfide bond. Ca(2+) contacts are provided by Asn116, Gln167, and Asp176. A disulfide bridge connects residues Cys155 and Cys169. Arg204 is a binding site for chloride. Residue Asp206 is the Nucleophile of the active site. His210 is a binding site for Ca(2+). The active-site Proton donor is the Glu243. Positions 306 and 341 each coordinate chloride. 3 disulfides stabilise this stretch: Cys374/Cys380, Cys416/Cys439, and Cys446/Cys458.

This sequence belongs to the glycosyl hydrolase 13 family. As to quaternary structure, monomer. It depends on Ca(2+) as a cofactor. Chloride is required as a cofactor.

It localises to the secreted. The enzyme catalyses Endohydrolysis of (1-&gt;4)-alpha-D-glucosidic linkages in polysaccharides containing three or more (1-&gt;4)-alpha-linked D-glucose units.. The sequence is that of Alpha-amylase-related protein (Amyrel) from Drosophila willistoni (Fruit fly).